The chain runs to 404 residues: Cysteine desulfurase IscS (404 aa).

Residues Ala-75–Thr-76, Asn-155, Gln-183, and Ser-203–His-205 each bind pyridoxal 5'-phosphate. Lys-206 carries the N6-(pyridoxal phosphate)lysine modification. Pyridoxal 5'-phosphate is bound at residue Thr-243. The active-site Cysteine persulfide intermediate is Cys-328. Residue Cys-328 coordinates [2Fe-2S] cluster.

This sequence belongs to the class-V pyridoxal-phosphate-dependent aminotransferase family. NifS/IscS subfamily. As to quaternary structure, homodimer. Forms a heterotetramer with IscU, interacts with other sulfur acceptors. Pyridoxal 5'-phosphate is required as a cofactor.

It localises to the cytoplasm. It carries out the reaction (sulfur carrier)-H + L-cysteine = (sulfur carrier)-SH + L-alanine. The protein operates within cofactor biosynthesis; iron-sulfur cluster biosynthesis. Functionally, master enzyme that delivers sulfur to a number of partners involved in Fe-S cluster assembly, tRNA modification or cofactor biosynthesis. Catalyzes the removal of elemental sulfur atoms from cysteine to produce alanine. Functions as a sulfur delivery protein for Fe-S cluster synthesis onto IscU, an Fe-S scaffold assembly protein, as well as other S acceptor proteins. This chain is Cysteine desulfurase IscS, found in Histophilus somni (strain 2336) (Haemophilus somnus).